The chain runs to 415 residues: Serine hydroxymethyltransferase (415 aa).

Residues Leu121 and 125-127 each bind (6S)-5,6,7,8-tetrahydrofolate; that span reads GHL. Lys230 is modified (N6-(pyridoxal phosphate)lysine). 355–357 contacts (6S)-5,6,7,8-tetrahydrofolate; the sequence is SPF.

The protein belongs to the SHMT family. As to quaternary structure, homodimer. Pyridoxal 5'-phosphate is required as a cofactor.

The protein resides in the cytoplasm. It catalyses the reaction (6R)-5,10-methylene-5,6,7,8-tetrahydrofolate + glycine + H2O = (6S)-5,6,7,8-tetrahydrofolate + L-serine. The protein operates within one-carbon metabolism; tetrahydrofolate interconversion. It participates in amino-acid biosynthesis; glycine biosynthesis; glycine from L-serine: step 1/1. In terms of biological role, catalyzes the reversible interconversion of serine and glycine with tetrahydrofolate (THF) serving as the one-carbon carrier. This reaction serves as the major source of one-carbon groups required for the biosynthesis of purines, thymidylate, methionine, and other important biomolecules. Also exhibits THF-independent aldolase activity toward beta-hydroxyamino acids, producing glycine and aldehydes, via a retro-aldol mechanism. The polypeptide is Serine hydroxymethyltransferase (Lactococcus lactis subsp. lactis (strain IL1403) (Streptococcus lactis)).